Reading from the N-terminus, the 669-residue chain is DNA ligase (669 aa).

NAD(+) is bound by residues 35 to 39 (DSVYD), 84 to 85 (SL), and E116. K118 acts as the N6-AMP-lysine intermediate in catalysis. The NAD(+) site is built by R139, E176, K291, and K315. Zn(2+) contacts are provided by C409, C412, C427, and C432. Residues 591-669 (TTKATLAGKT…EAQLLELIKA (79 aa)) form the BRCT domain.

The protein belongs to the NAD-dependent DNA ligase family. LigA subfamily. Mg(2+) is required as a cofactor. The cofactor is Mn(2+).

It catalyses the reaction NAD(+) + (deoxyribonucleotide)n-3'-hydroxyl + 5'-phospho-(deoxyribonucleotide)m = (deoxyribonucleotide)n+m + AMP + beta-nicotinamide D-nucleotide.. In terms of biological role, DNA ligase that catalyzes the formation of phosphodiester linkages between 5'-phosphoryl and 3'-hydroxyl groups in double-stranded DNA using NAD as a coenzyme and as the energy source for the reaction. It is essential for DNA replication and repair of damaged DNA. The chain is DNA ligase from Microcystis aeruginosa (strain NIES-843 / IAM M-2473).